We begin with the raw amino-acid sequence, 272 residues long: tRNA pseudouridine synthase A (272 aa).

D52 serves as the catalytic Nucleophile. A substrate-binding site is contributed by Y110.

This sequence belongs to the tRNA pseudouridine synthase TruA family. Homodimer.

The catalysed reaction is uridine(38/39/40) in tRNA = pseudouridine(38/39/40) in tRNA. In terms of biological role, formation of pseudouridine at positions 38, 39 and 40 in the anticodon stem and loop of transfer RNAs. The protein is tRNA pseudouridine synthase A of Cupriavidus necator (strain ATCC 17699 / DSM 428 / KCTC 22496 / NCIMB 10442 / H16 / Stanier 337) (Ralstonia eutropha).